Consider the following 393-residue polypeptide: Chalcone synthase 2 (393 aa).

Cys-166 is a catalytic residue.

The protein belongs to the thiolase-like superfamily. Chalcone/stilbene synthases family.

The enzyme catalyses (E)-4-coumaroyl-CoA + 3 malonyl-CoA + 3 H(+) = 2',4,4',6'-tetrahydroxychalcone + 3 CO2 + 4 CoA. The protein operates within secondary metabolite biosynthesis; flavonoid biosynthesis. The primary product of this enzyme is 4,2',4',6'-tetrahydroxychalcone (also termed naringenin-chalcone or chalcone) which can under specific conditions spontaneously isomerize into naringenin. This Ruta graveolens (Common rue) protein is Chalcone synthase 2 (CHS2).